The following is a 282-amino-acid chain: Exo-glucosaminidase LytG (282 aa).

The first 29 residues, 1–29 (MARKKLKKRKLLISLFFLVSIPLALFVLA), serve as a signal peptide directing secretion. The GW domain maps to 203 to 281 (SLKSVDLNAS…DDSAVEIKEA (79 aa)).

This sequence belongs to the glycosyl hydrolase 73 family. Requires Mg(2+) as cofactor.

It localises to the secreted. The protein resides in the cell wall. With respect to regulation, inhibited by EDTA. In terms of biological role, is the major glucosaminidase responsible for peptidoglycan structural determination during vegetative growth. Catalyzes the hydrolysis of 1,4-beta-linkages between N-acetyl-D-glucosamine and N-acetylmuramic acid residues in peptidoglycan. Acts processively from the ends of the glycan strands. Also plays a role in motility, chemotaxis and cell division. The protein is Exo-glucosaminidase LytG (lytG) of Bacillus subtilis (strain 168).